We begin with the raw amino-acid sequence, 568 residues long: Sulfite reductase [NADPH] hemoprotein beta-component (568 aa).

[4Fe-4S] cluster contacts are provided by cysteine 425, cysteine 431, cysteine 470, and cysteine 474. Cysteine 474 is a binding site for siroheme.

This sequence belongs to the nitrite and sulfite reductase 4Fe-4S domain family. In terms of assembly, alpha(8)-beta(8). The alpha component is a flavoprotein, the beta component is a hemoprotein. Siroheme serves as cofactor. [4Fe-4S] cluster is required as a cofactor.

It catalyses the reaction hydrogen sulfide + 3 NADP(+) + 3 H2O = sulfite + 3 NADPH + 4 H(+). The protein operates within sulfur metabolism; hydrogen sulfide biosynthesis; hydrogen sulfide from sulfite (NADPH route): step 1/1. Its function is as follows. Component of the sulfite reductase complex that catalyzes the 6-electron reduction of sulfite to sulfide. This is one of several activities required for the biosynthesis of L-cysteine from sulfate. This is Sulfite reductase [NADPH] hemoprotein beta-component from Xanthomonas campestris pv. campestris (strain ATCC 33913 / DSM 3586 / NCPPB 528 / LMG 568 / P 25).